A 310-amino-acid chain; its full sequence is GMP synthase [glutamine-hydrolyzing] subunit B (310 aa).

Residues 2-185 (FDAKSFIEES…LGLPEKIAHR (184 aa)) enclose the GMPS ATP-PPase domain. ATP is bound at residue 29–35 (SGGVDSS).

Heterodimer composed of a glutamine amidotransferase subunit (A) and a GMP-binding subunit (B).

It carries out the reaction XMP + L-glutamine + ATP + H2O = GMP + L-glutamate + AMP + diphosphate + 2 H(+). Its pathway is purine metabolism; GMP biosynthesis; GMP from XMP (L-Gln route): step 1/1. Catalyzes the synthesis of GMP from XMP. This Methanococcus vannielii (strain ATCC 35089 / DSM 1224 / JCM 13029 / OCM 148 / SB) protein is GMP synthase [glutamine-hydrolyzing] subunit B.